A 397-amino-acid chain; its full sequence is Succinate--CoA ligase [ADP-forming] subunit beta (397 aa).

The 245-residue stretch at 9 to 253 (KEILASYGVR…IREENPIEVE (245 aa)) folds into the ATP-grasp domain. Residues K50, 57–59 (GRG), V106, and E116 each bind ATP. Residues N208 and D222 each contribute to the Mg(2+) site. Substrate-binding positions include N273 and 330 to 332 (GIV).

The protein belongs to the succinate/malate CoA ligase beta subunit family. As to quaternary structure, heterotetramer of two alpha and two beta subunits. Requires Mg(2+) as cofactor.

It catalyses the reaction succinate + ATP + CoA = succinyl-CoA + ADP + phosphate. The enzyme catalyses GTP + succinate + CoA = succinyl-CoA + GDP + phosphate. The protein operates within carbohydrate metabolism; tricarboxylic acid cycle; succinate from succinyl-CoA (ligase route): step 1/1. Succinyl-CoA synthetase functions in the citric acid cycle (TCA), coupling the hydrolysis of succinyl-CoA to the synthesis of either ATP or GTP and thus represents the only step of substrate-level phosphorylation in the TCA. The beta subunit provides nucleotide specificity of the enzyme and binds the substrate succinate, while the binding sites for coenzyme A and phosphate are found in the alpha subunit. In Flavobacterium johnsoniae (strain ATCC 17061 / DSM 2064 / JCM 8514 / BCRC 14874 / CCUG 350202 / NBRC 14942 / NCIMB 11054 / UW101) (Cytophaga johnsonae), this protein is Succinate--CoA ligase [ADP-forming] subunit beta.